We begin with the raw amino-acid sequence, 302 residues long: UPF0761 membrane protein Tola_0461 (302 aa).

6 helical membrane passes run 51–71, 111–131, 150–170, 188–208, 222–242, and 256–276; these read YVSL…LSWL, TTSI…AAID, ITMY…SLLL, LGGG…ILLL, ALLG…GFGY, and ALAG…VVLL.

It belongs to the UPF0761 family.

It is found in the cell inner membrane. This Tolumonas auensis (strain DSM 9187 / NBRC 110442 / TA 4) protein is UPF0761 membrane protein Tola_0461.